Reading from the N-terminus, the 461-residue chain is MTNYPFFRQGTIFVDNSAIQRNSENKNSLSIENIFGRFPKEFFQFFSINVSKSTTKKSSVVIKPSTITAPWLENEYLDSNTSLLSVHSIQPSFIGMSDFAIGLDPSLKRILPEIRFRLDFQHLKSIAKGATSTIKVVTHRDKITDAKIYYAAKVYRKTKTSHKKRLNTMVYFLREWSIQPKLDHPNILKVICPCVTLTSVFNKSAGFCLVQEYCPQGDLFKQIEEKVLTLEDKCCYLKQILQAVAYLQSQRIAHRDLKPENILIGRDGLLKLTDFGTSEIVGNPGDNESIRFVSGAVGSLAYLAPEAFHENEYCGLLADRWSCGILLKVLFTGYFPFKTSVKTDLYYSKYMSILTDTCGISSTDESSFQTEVIKQIPTLQPLRYIPEGAKKIILSLLNPDSQNRPSLDSILGTAWVRKLDCCSNFSTDHENKSLQEVDFDASKPITRKSLIPRIHNHQTLV.

The Protein kinase domain occupies 120–416 (FQHLKSIAKG…LDSILGTAWV (297 aa)). ATP is bound by residues 126–134 (IAKGATSTI) and K153. D256 serves as the catalytic Proton acceptor.

Belongs to the protein kinase superfamily. Ser/Thr protein kinase family.

The protein localises to the mitochondrion. The catalysed reaction is L-seryl-[protein] + ATP = O-phospho-L-seryl-[protein] + ADP + H(+). It catalyses the reaction L-threonyl-[protein] + ATP = O-phospho-L-threonyl-[protein] + ADP + H(+). Its function is as follows. Has a role late in meiosis. The polypeptide is Serine/threonine-protein kinase ppk24, mitochondrial (ppk24) (Schizosaccharomyces pombe (strain 972 / ATCC 24843) (Fission yeast)).